We begin with the raw amino-acid sequence, 257 residues long: Deoxyribose-phosphate aldolase (257 aa).

Asp-102 acts as the Proton donor/acceptor in catalysis. The active-site Schiff-base intermediate with acetaldehyde is the Lys-166. Lys-198 serves as the catalytic Proton donor/acceptor.

This sequence belongs to the DeoC/FbaB aldolase family. DeoC type 2 subfamily.

The protein resides in the cytoplasm. The enzyme catalyses 2-deoxy-D-ribose 5-phosphate = D-glyceraldehyde 3-phosphate + acetaldehyde. It functions in the pathway carbohydrate degradation; 2-deoxy-D-ribose 1-phosphate degradation; D-glyceraldehyde 3-phosphate and acetaldehyde from 2-deoxy-alpha-D-ribose 1-phosphate: step 2/2. In terms of biological role, catalyzes a reversible aldol reaction between acetaldehyde and D-glyceraldehyde 3-phosphate to generate 2-deoxy-D-ribose 5-phosphate. The protein is Deoxyribose-phosphate aldolase of Shewanella amazonensis (strain ATCC BAA-1098 / SB2B).